The sequence spans 537 residues: 5,6-dihydroxyindole-2-carboxylic acid oxidase (537 aa).

An N-terminal signal peptide occupies residues 1–24 (MKSPTLLSLGYMFLVLLFFQQAWA). Residues 25–477 (QFPRECATIE…WPSRSFSISE (453 aa)) lie on the Lumenal, melanosome side of the membrane. 5 disulfides stabilise this stretch: Cys-30-Cys-41, Cys-42-Cys-65, Cys-56-Cys-99, Cys-101-Cys-110, and Cys-113-Cys-122. Asn-96 and Asn-104 each carry an N-linked (GlcNAc...) asparagine glycan. The N-linked (GlcNAc...) asparagine glycan is linked to Asn-181. 3 residues coordinate Zn(2+): His-192, His-215, and His-224. Cystine bridges form between Cys-258–Cys-261 and Cys-290–Cys-303. 2 N-linked (GlcNAc...) asparagine glycosylation sites follow: Asn-304 and Asn-350. The Zn(2+) site is built by His-377 and His-381. Asn-385 carries N-linked (GlcNAc...) asparagine glycosylation. His-404 is a Zn(2+) binding site. A helical transmembrane segment spans residues 478-501 (IVTIAVVAALSLVAVIFAGASCLI). At 502-537 (RARSNMDEANQPLLTDQYQHYIEEYEKIHNPNQSVV) the chain is on the cytoplasmic side.

It belongs to the tyrosinase family. As to quaternary structure, monomer. Interacts with ATP7A. Interacts with SLC45A2. The cofactor is Cu(2+). It depends on Zn(2+) as a cofactor. In terms of processing, glycosylated.

It localises to the melanosome membrane. The enzyme catalyses 2 5,6-dihydroxyindole-2-carboxylate + O2 = 2 indole-5,6-quinone-2-carboxylate + 2 H2O. It functions in the pathway pigment biosynthesis; melanin biosynthesis. Its function is as follows. Plays a role in melanin biosynthesis. Catalyzes the oxidation of 5,6-dihydroxyindole-2-carboxylic acid (DHICA) into indole-5,6-quinone-2-carboxylic acid. May regulate or influence the type of melanin synthesized. Also to a lower extent, capable of hydroxylating tyrosine and producing melanin. The polypeptide is 5,6-dihydroxyindole-2-carboxylic acid oxidase (TYRP1) (Bos taurus (Bovine)).